The sequence spans 115 residues: Dolichyl-diphosphooligosaccharide--protein glycosyltransferase subunit DAD1 (115 aa).

The Cytoplasmic portion of the chain corresponds to 1–31; sequence MGTSTAKEAHALIASLRSAYSATPTKLKIID. A helical transmembrane segment spans residues 32-52; the sequence is LYVVYAILTAVVQVVYMAIVG. At 53-55 the chain is on the lumenal side; it reads SFP. Residues 56–76 form a helical membrane-spanning segment; the sequence is FNAFLSGVLSCTGTAVLAVCL. Residues 77–94 lie on the Cytoplasmic side of the membrane; that stretch reads RMQVNKENREFKDLPPER. The helical transmembrane segment at 95-115 threads the bilayer; it reads AFADFVLCNLVLHLVIMNFLG.

This sequence belongs to the DAD/OST2 family. In terms of assembly, component of the oligosaccharyltransferase (OST) complex.

The protein resides in the endoplasmic reticulum membrane. Its pathway is protein modification; protein glycosylation. Subunit of the oligosaccharyl transferase (OST) complex that catalyzes the initial transfer of a defined glycan (Glc(3)Man(9)GlcNAc(2) in eukaryotes) from the lipid carrier dolichol-pyrophosphate to an asparagine residue within an Asn-X-Ser/Thr consensus motif in nascent polypeptide chains, the first step in protein N-glycosylation. N-glycosylation occurs cotranslationally and the complex associates with the Sec61 complex at the channel-forming translocon complex that mediates protein translocation across the endoplasmic reticulum (ER). All subunits are required for a maximal enzyme activity. This chain is Dolichyl-diphosphooligosaccharide--protein glycosyltransferase subunit DAD1 (DAD1), found in Picea mariana (Black spruce).